Reading from the N-terminus, the 35-residue chain is Trypsin inhibitor 1 (35 aa).

3 disulfide bridges follow: C2–C19, C9–C23, and C18–C34.

Functionally, trypsin inhibitor. The chain is Trypsin inhibitor 1 from Spinacia oleracea (Spinach).